We begin with the raw amino-acid sequence, 128 residues long: UPF0325 protein YaeH (128 aa).

It belongs to the UPF0325 family.

The polypeptide is UPF0325 protein YaeH (Shigella boydii serotype 18 (strain CDC 3083-94 / BS512)).